Reading from the N-terminus, the 277-residue chain is Ubiquinone biosynthesis protein COQ4, mitochondrial (277 aa).

The transit peptide at 1 to 14 (MLTKRALRTTDPYR) directs the protein to the mitochondrion. Zn(2+)-binding residues include H157, D158, H161, and E173.

This sequence belongs to the COQ4 family. In terms of assembly, component of a multi-subunit COQ enzyme complex, composed of at least COQ3, COQ4, COQ5, COQ6, COQ7 and COQ9. Zn(2+) serves as cofactor.

It is found in the mitochondrion inner membrane. The catalysed reaction is a 4-hydroxy-3-methoxy-5-(all-trans-polyprenyl)benzoate + H(+) = a 2-methoxy-6-(all-trans-polyprenyl)phenol + CO2. The protein operates within cofactor biosynthesis; ubiquinone biosynthesis. Its function is as follows. Lyase that catalyzes the C1-decarboxylation of 4-hydroxy-3-methoxy-5-(all-trans-polyprenyl)benzoic acid into 2-methoxy-6-(all-trans-polyprenyl)phenol during ubiquinone biosynthesis. The chain is Ubiquinone biosynthesis protein COQ4, mitochondrial from Ajellomyces capsulatus (strain NAm1 / WU24) (Darling's disease fungus).